A 346-amino-acid chain; its full sequence is Alkylated DNA repair protein ALKBH8 homolog (346 aa).

A disordered region spans residues 1 to 21 (MVQPRFVRPTQSSPSSISGEP). Over residues 12-21 (SSPSSISGEP) the composition is skewed to low complexity. One can recognise an RRM domain in the interval 24–102 (SNLYVANCGP…RSLHIRYSVL (79 aa)). The Fe2OG dioxygenase domain occupies 208–328 (NLDQLTVNEY…RVSFTLRKVR (121 aa)). Fe cation contacts are provided by histidine 226, aspartate 228, and histidine 298. Arginine 319 and arginine 325 together coordinate 2-oxoglutarate.

The protein belongs to the alkB family. It depends on Fe(2+) as a cofactor.

Binds tRNA and catalyzes the iron and alpha-ketoglutarate dependent hydroxylation of 5-methylcarboxymethyl uridine at the wobble position of the anticodon loop in tRNA via its dioxygenase domain, giving rise to 5-(S)-methoxycarbonylhydroxymethyluridine. The chain is Alkylated DNA repair protein ALKBH8 homolog from Arabidopsis thaliana (Mouse-ear cress).